Here is a 427-residue protein sequence, read N- to C-terminus: Chaperone SurA (427 aa).

The signal sequence occupies residues 1–19 (MKIWKSILFTTLLSCGAVA). PpiC domains are found at residues 170-268 (TVQY…KIED) and 277-377 (VTEV…EVLD).

It is found in the periplasm. The enzyme catalyses [protein]-peptidylproline (omega=180) = [protein]-peptidylproline (omega=0). In terms of biological role, chaperone involved in the correct folding and assembly of outer membrane proteins. Recognizes specific patterns of aromatic residues and the orientation of their side chains, which are found more frequently in integral outer membrane proteins. May act in both early periplasmic and late outer membrane-associated steps of protein maturation. The sequence is that of Chaperone SurA from Vibrio parahaemolyticus serotype O3:K6 (strain RIMD 2210633).